Reading from the N-terminus, the 314-residue chain is tRNA dimethylallyltransferase (314 aa).

11–18 (GPTASGKT) serves as a coordination point for ATP. Substrate is bound at residue 13-18 (TASGKT). 4 interaction with substrate tRNA regions span residues 36–39 (DSAL), 160–164 (QRINR), 241–246 (RCVGYR), and 274–281 (KRQITWLR).

It belongs to the IPP transferase family. In terms of assembly, monomer. The cofactor is Mg(2+).

It catalyses the reaction adenosine(37) in tRNA + dimethylallyl diphosphate = N(6)-dimethylallyladenosine(37) in tRNA + diphosphate. Catalyzes the transfer of a dimethylallyl group onto the adenine at position 37 in tRNAs that read codons beginning with uridine, leading to the formation of N6-(dimethylallyl)adenosine (i(6)A). This chain is tRNA dimethylallyltransferase, found in Glaesserella parasuis serovar 5 (strain SH0165) (Haemophilus parasuis).